The sequence spans 95 residues: UPF0358 protein BA_4159/GBAA_4159/BAS3861 (95 aa).

It belongs to the UPF0358 family.

This is UPF0358 protein BA_4159/GBAA_4159/BAS3861 from Bacillus anthracis.